Reading from the N-terminus, the 332-residue chain is Torsin-1A (332 aa).

An N-terminal signal peptide occupies residues 1–20 (MKLGRAALGLLLLAPSVVQA). Residues 91–251 (KPKKPLTLSL…VSVFNNKNSG (161 aa)) are interaction with SNAPIN. An ATP-binding site is contributed by 102 to 109 (GWTGTGKN). 2 N-linked (GlcNAc...) asparagine glycosylation sites follow: Asn143 and Asn158. The interval 251-332 (GFWHSSLIDR…FTKLDYYYDD (82 aa)) is interaction with KLC1. Positions 312–332 (RVFSDKGCKTVFTKLDYYYDD) are interaction with SYNE3.

This sequence belongs to the ClpA/ClpB family. Torsin subfamily. Homohexamer. Interacts with TOR1B; the interaction may be specific of neural tissues. Interacts (ATP-bound) with TOR1AIP1 and TOR1AIP2; the interactions induce ATPase activity. Interacts with KLHL14; preferentially when ATP-free. Interacts with KLC1 (via TPR repeats); the interaction associates TOR1A with the kinesin oligomeric complex. Interacts with COPS4; the interaction associates TOR1A with the CSN complex. Interacts with SNAPIN; the interaction is direct and associates SNAPIN with the CSN complex. Interacts with STON2. Interacts (ATP-bound) with SYNE3 (via KASH domain); the interaction is required for SYNE3 nuclear envelope localization. Interacts with VIM; the interaction associates TOR1A with the cytoskeleton. Interacts with PLEC. Interacts (ATP-bound) with SLC6A3; regulates SLC6A3 transport to the plasma membrane. In terms of processing, N-glycosylated.

It is found in the endoplasmic reticulum lumen. The protein localises to the nucleus membrane. The protein resides in the cell projection. Its subcellular location is the growth cone. It localises to the cytoplasmic vesicle membrane. It is found in the cytoplasmic vesicle. The protein localises to the secretory vesicle. The protein resides in the synaptic vesicle. Its subcellular location is the cytoplasm. It localises to the cytoskeleton. It carries out the reaction ATP + H2O = ADP + phosphate + H(+). Its function is as follows. Protein with chaperone functions important for the control of protein folding, processing, stability and localization as well as for the reduction of misfolded protein aggregates. Involved in the regulation of synaptic vesicle recycling, controls STON2 protein stability in collaboration with the COP9 signalosome complex (CSN). In the nucleus, may link the cytoskeleton with the nuclear envelope, this mechanism seems to be crucial for the control of nuclear polarity, cell movement and, specifically in neurons, nuclear envelope integrity. Participates in the cellular trafficking and may regulate the subcellular location of multipass membrane proteins such as the dopamine transporter SLC6A3, leading to the modulation of dopamine neurotransmission. In the endoplasmic reticulum, plays a role in the quality control of protein folding by increasing clearance of misfolded proteins such as SGCE variants or holding them in an intermediate state for proper refolding. May have a redundant function with TOR1B in non-neural tissues. This Macaca fascicularis (Crab-eating macaque) protein is Torsin-1A (TOR1A).